A 355-amino-acid polypeptide reads, in one-letter code: 3-isopropylmalate dehydrogenase (355 aa).

Arginine 90, arginine 100, arginine 128, and aspartate 222 together coordinate substrate. 3 residues coordinate Mg(2+): aspartate 222, aspartate 246, and aspartate 250. Residue 280–292 (GSAPDIAGKGIAN) participates in NAD(+) binding.

Belongs to the isocitrate and isopropylmalate dehydrogenases family. LeuB type 1 subfamily. In terms of assembly, homodimer. It depends on Mg(2+) as a cofactor. Mn(2+) serves as cofactor.

The protein resides in the cytoplasm. The catalysed reaction is (2R,3S)-3-isopropylmalate + NAD(+) = 4-methyl-2-oxopentanoate + CO2 + NADH. Its pathway is amino-acid biosynthesis; L-leucine biosynthesis; L-leucine from 3-methyl-2-oxobutanoate: step 3/4. Catalyzes the oxidation of 3-carboxy-2-hydroxy-4-methylpentanoate (3-isopropylmalate) to 3-carboxy-4-methyl-2-oxopentanoate. The product decarboxylates to 4-methyl-2 oxopentanoate. In Burkholderia multivorans (strain ATCC 17616 / 249), this protein is 3-isopropylmalate dehydrogenase.